The primary structure comprises 126 residues: Holo-[acyl-carrier-protein] synthase (126 aa).

Residues Asp8 and Glu59 each coordinate Mg(2+).

It belongs to the P-Pant transferase superfamily. AcpS family. The cofactor is Mg(2+).

Its subcellular location is the cytoplasm. The enzyme catalyses apo-[ACP] + CoA = holo-[ACP] + adenosine 3',5'-bisphosphate + H(+). Functionally, transfers the 4'-phosphopantetheine moiety from coenzyme A to a Ser of acyl-carrier-protein. This is Holo-[acyl-carrier-protein] synthase from Rickettsia akari (strain Hartford).